Consider the following 154-residue polypeptide: Protein X (154 aa).

The tract at residues 68 to 117 (PCALRFTSARYMETAMNTSHHLPRQLYKWTLGLFVMSTTGVEKYFKDCVF) is mitochondrial targeting sequence.

It belongs to the orthohepadnavirus protein X family. As to quaternary structure, may form homodimer. May interact with host CEBPA, CFLAR, CREB1, DDB1, E4F1, HBXIP, HSPD1/HSP60, NFKBIA, POLR2E and SMAD4. Interacts with host SMC5-SMC6 complex and induces its degradation. Interacts with host TRPC4AP; leading to prevent ubiquitination of TRPC4AP. Interacts with host PLSCR1; this interaction promotes ubiquitination and degradation of HBx and impairs HBx-mediated cell proliferation. Post-translationally, a fraction may be phosphorylated in insect cells and HepG2 cells, a human hepatoblastoma cell line. Phosphorylated in vitro by host protein kinase C or mitogen-activated protein kinase. N-acetylated in insect cells.

It is found in the host cytoplasm. It localises to the host nucleus. The protein localises to the host mitochondrion. Functionally, multifunctional protein that plays a role in silencing host antiviral defenses and promoting viral transcription. Does not seem to be essential for HBV infection. May be directly involved in development of cirrhosis and liver cancer (hepatocellular carcinoma). Most of cytosolic activities involve modulation of cytosolic calcium. The effect on apoptosis is controversial depending on the cell types in which the studies have been conducted. May induce apoptosis by localizing in mitochondria and causing loss of mitochondrial membrane potential. May also modulate apoptosis by binding host CFLAR, a key regulator of the death-inducing signaling complex (DISC). Promotes viral transcription by using the host E3 ubiquitin ligase DDB1 to target the SMC5-SMC6 complex to proteasomal degradation. This host complex would otherwise bind to viral episomal DNA, and prevents its transcription. Moderately stimulates transcription of many different viral and cellular transcription elements. Promoters and enhancers stimulated by HBx contain DNA binding sites for NF-kappa-B, AP-1, AP-2, c-EBP, ATF/CREB, or the calcium-activated factor NF-AT. This is Protein X from Hepatitis B virus genotype G (isolate IG29227/2000) (HBV-G).